Consider the following 243-residue polypeptide: ATP synthase subunit a, chloroplastic (243 aa).

A run of 5 helical transmembrane segments spans residues 32–52, 91–111, 130–150, 195–215, and 216–236; these read AQVL…ALIA, IPFV…GALI, INTT…AGLN, LVVA…MMFL, and GLFT…AYIG.

The protein belongs to the ATPase A chain family. As to quaternary structure, F-type ATPases have 2 components, CF(1) - the catalytic core - and CF(0) - the membrane proton channel. CF(1) has five subunits: alpha(3), beta(3), gamma(1), delta(1), epsilon(1). CF(0) has four main subunits: a, b, b' and c.

It is found in the plastid. The protein localises to the chloroplast thylakoid membrane. Its function is as follows. Key component of the proton channel; it plays a direct role in the translocation of protons across the membrane. In Chaetosphaeridium globosum (Charophycean green alga), this protein is ATP synthase subunit a, chloroplastic.